The following is a 142-amino-acid chain: Midkine-A (142 aa).

The signal sequence occupies residues 1 to 20; that stretch reads MELRAFCVILLITVLAVSSQ. Disulfide bonds link C36–C60, C44–C69, C51–C73, C83–C115, and C93–C125.

Belongs to the pleiotrophin family. As to expression, expression at the mid-gastrula stage begins in the neural anlage, and becomes increasingly prominent in the central nervous system and head mesenchyme during neurula stages. Although the mRNA is localized to the developing central nervous system (CNS), the protein is deposited at the neuromuscular junction (NMJ). In the tailbud stage embryo, expressed in the head and tail regions as well as in the CNS. In adults, expression is highest in the brain, eye and bone, with lower expression in the heart and lung. Not expressed in the ovary.

Its subcellular location is the secreted. Functionally, secreted protein that functions as a cytokine and growth factor and mediates its signal through cell-surface proteoglycan and non-proteoglycan receptors. Binds cell-surface proteoglycan receptors via their chondroitin sulfate (CS) groups. Thereby regulates many processes like inflammatory response, cell proliferation, cell adhesion, cell growth, cell survival, tissue regeneration, cell differentiation and cell migration. Inhibits mesoderm formation and promotes neural formation during development. Plays a role in development of the neuromuscular junction (NMJ). Has antibacterial activity against both Gram-positive and Gram-negative bacteria. This Xenopus laevis (African clawed frog) protein is Midkine-A (mdk-a).